Consider the following 43-residue polypeptide: Potassium channel toxin gamma-KTx 4.8 (43 aa).

4 disulfides stabilise this stretch: Cys5-Cys23, Cys11-Cys34, Cys20-Cys39, and Cys24-Cys41.

This sequence belongs to the ergtoxin family. Gamma-KTx 4 subfamily. Expressed by the venom gland.

It is found in the secreted. Reversibly blocks Kv11/ERG potassium channels. The protein is Potassium channel toxin gamma-KTx 4.8 of Centruroides elegans (Bark scorpion).